Here is a 399-residue protein sequence, read N- to C-terminus: S-adenosylmethionine synthase (399 aa).

His17 contacts ATP. Residue Asp19 coordinates Mg(2+). Residue Glu45 coordinates K(+). Residues Glu58 and Gln101 each coordinate L-methionine. The flexible loop stretch occupies residues 101–111 (QSPDIAQGVDE). ATP-binding positions include 177-179 (DAK), 244-245 (RF), Asp253, 259-260 (RK), Ala276, and Lys280. L-methionine is bound at residue Asp253. Position 284 (Lys284) interacts with L-methionine.

It belongs to the AdoMet synthase family. Homotetramer; dimer of dimers. Mg(2+) is required as a cofactor. Requires K(+) as cofactor.

Its subcellular location is the cytoplasm. It carries out the reaction L-methionine + ATP + H2O = S-adenosyl-L-methionine + phosphate + diphosphate. It functions in the pathway amino-acid biosynthesis; S-adenosyl-L-methionine biosynthesis; S-adenosyl-L-methionine from L-methionine: step 1/1. Its function is as follows. Catalyzes the formation of S-adenosylmethionine (AdoMet) from methionine and ATP. The overall synthetic reaction is composed of two sequential steps, AdoMet formation and the subsequent tripolyphosphate hydrolysis which occurs prior to release of AdoMet from the enzyme. The protein is S-adenosylmethionine synthase of Listeria welshimeri serovar 6b (strain ATCC 35897 / DSM 20650 / CCUG 15529 / CIP 8149 / NCTC 11857 / SLCC 5334 / V8).